Reading from the N-terminus, the 483-residue chain is CBL-interacting serine/threonine-protein kinase 19 (483 aa).

One can recognise a Protein kinase domain in the interval 28–282 (YEMGRLLGHG…MPDIMETSWF (255 aa)). Residues 34-42 (LGHGTFAKV) and Lys57 contribute to the ATP site. The active-site Proton acceptor is the Asp150. The activation loop stretch occupies residues 168 to 197 (DFGLSAVSDQIRQDGLFHTFCGTPAYVAPE). Ser172 is subject to Phosphoserine. Phosphothreonine is present on Thr186. The span at 313–322 (SVSGRSSTVS) shows a compositional bias: polar residues. The segment at 313-338 (SVSGRSSTVSEPEDFESFDGRRRGGS) is disordered. One can recognise an NAF domain in the interval 340–364 (PRPASLNAFDLISFSPGFDLSGLFE). The tract at residues 367–396 (GEGSRFVSGAPVGQIISKLEEIARIVSFTV) is PPI. The interval 459–483 (NLSSENGQRVSGSRSLPSFLLSDTD) is disordered.

It belongs to the protein kinase superfamily. CAMK Ser/Thr protein kinase family. SNF1 subfamily. Requires Mn(2+) as cofactor.

The catalysed reaction is L-seryl-[protein] + ATP = O-phospho-L-seryl-[protein] + ADP + H(+). The enzyme catalyses L-threonyl-[protein] + ATP = O-phospho-L-threonyl-[protein] + ADP + H(+). In terms of biological role, CIPK serine-threonine protein kinases interact with CBL proteins. Binding of a CBL protein to the regulatory NAF domain of CIPK protein lead to the activation of the kinase in a calcium-dependent manner. This is CBL-interacting serine/threonine-protein kinase 19 (CIPK19) from Arabidopsis thaliana (Mouse-ear cress).